The chain runs to 508 residues: DNA-directed RNA polymerase subunit Rpo1C (508 aa).

The interval 1-123 (MASLLWRDTS…EIKEKYGENL (123 aa)) is unknown. Residues 124-508 (SEDVQKVLDD…IYKGYPKTKK (385 aa)) are DNA-directed RNA polymerase subunit Rpo1C.

The protein belongs to the RNA polymerase beta' chain family. Part of the RNA polymerase complex.

The protein resides in the cytoplasm. The catalysed reaction is RNA(n) + a ribonucleoside 5'-triphosphate = RNA(n+1) + diphosphate. Its function is as follows. DNA-dependent RNA polymerase (RNAP) catalyzes the transcription of DNA into RNA using the four ribonucleoside triphosphates as substrates. Forms part of the jaw domain. In Thermoplasma acidophilum (strain ATCC 25905 / DSM 1728 / JCM 9062 / NBRC 15155 / AMRC-C165), this protein is DNA-directed RNA polymerase subunit Rpo1C.